Reading from the N-terminus, the 35-residue chain is MPCPKILKQCKSDEDCCRGWKCFGFSIKDKMCISR.

3 disulfide bridges follow: Cys-3-Cys-17, Cys-10-Cys-22, and Cys-16-Cys-32.

As to expression, expressed by the venom gland.

Its subcellular location is the secreted. Neurotoxin. This Phoneutria nigriventer (Brazilian armed spider) protein is U14-ctenitoxin-Pn1a.